A 489-amino-acid polypeptide reads, in one-letter code: Bifunctional protein HldE (489 aa).

Residues 1-328 (METENIHSFD…ELKAQLQDQP (328 aa)) form a ribokinase region. 206-209 (NKKE) is a binding site for ATP. D276 is a catalytic residue. The cytidylyltransferase stretch occupies residues 357–489 (LTNGCFDLLH…IIQDIRNGRG (133 aa)).

This sequence in the N-terminal section; belongs to the carbohydrate kinase PfkB family. The protein in the C-terminal section; belongs to the cytidylyltransferase family. As to quaternary structure, homodimer.

It catalyses the reaction D-glycero-beta-D-manno-heptose 7-phosphate + ATP = D-glycero-beta-D-manno-heptose 1,7-bisphosphate + ADP + H(+). The catalysed reaction is D-glycero-beta-D-manno-heptose 1-phosphate + ATP + H(+) = ADP-D-glycero-beta-D-manno-heptose + diphosphate. Its pathway is nucleotide-sugar biosynthesis; ADP-L-glycero-beta-D-manno-heptose biosynthesis; ADP-L-glycero-beta-D-manno-heptose from D-glycero-beta-D-manno-heptose 7-phosphate: step 1/4. It functions in the pathway nucleotide-sugar biosynthesis; ADP-L-glycero-beta-D-manno-heptose biosynthesis; ADP-L-glycero-beta-D-manno-heptose from D-glycero-beta-D-manno-heptose 7-phosphate: step 3/4. Functionally, catalyzes the phosphorylation of D-glycero-D-manno-heptose 7-phosphate at the C-1 position to selectively form D-glycero-beta-D-manno-heptose-1,7-bisphosphate. In terms of biological role, catalyzes the ADP transfer from ATP to D-glycero-beta-D-manno-heptose 1-phosphate, yielding ADP-D-glycero-beta-D-manno-heptose. The chain is Bifunctional protein HldE from Desulfatibacillum aliphaticivorans.